The primary structure comprises 200 residues: Ribonuclease HII (200 aa).

One can recognise an RNase H type-2 domain in the interval 10 to 200 (LIEAGCDEAG…LGDGQLNLNF (191 aa)). 3 residues coordinate a divalent metal cation: Asp16, Glu17, and Asp108.

This sequence belongs to the RNase HII family. Mn(2+) is required as a cofactor. It depends on Mg(2+) as a cofactor.

It is found in the cytoplasm. It catalyses the reaction Endonucleolytic cleavage to 5'-phosphomonoester.. In terms of biological role, endonuclease that specifically degrades the RNA of RNA-DNA hybrids. The polypeptide is Ribonuclease HII (Bacteroides thetaiotaomicron (strain ATCC 29148 / DSM 2079 / JCM 5827 / CCUG 10774 / NCTC 10582 / VPI-5482 / E50)).